Consider the following 109-residue polypeptide: Homeobox protein E30 (109 aa).

The segment covering 1–12 (GPRTRRVKRSHN) has biased composition (basic residues). The interval 1–27 (GPRTRRVKRSHNGKNGSPEEKRPRTAF) is disordered. The homeobox DNA-binding region spans 20-79 (EKRPRTAFSAEQLARLKREFAENRYLTERRRQQLSRDLGLTEAQIKIWFQNKRAKIKKAS).

The protein belongs to the engrailed homeobox family.

Its subcellular location is the nucleus. This Apis mellifera (Honeybee) protein is Homeobox protein E30.